The sequence spans 399 residues: Syndecan (399 aa).

The N-terminal stretch at 1 to 28 (MKPKQKISVEPLLLVAILIGVLVAATHA) is a signal peptide. The tract at residues 28 to 319 (AQDQKSVKPS…TKGIDHRPNG (292 aa)) is disordered. Residues 29 to 340 (QDQKSVKPSA…TSSFFSQPGI (312 aa)) are Extracellular-facing. The segment covering 36–46 (PSAAAPSAAAS) has biased composition (low complexity). Serine 62 is a glycosylation site (O-linked (Xyl...) (glycosaminoglycan) serine). A compositionally biased stretch (basic and acidic residues) spans 67-77 (GIHEDLEKDPD). Serine 79, serine 81, and serine 110 each carry an O-linked (Xyl...) (glycosaminoglycan) serine glycan. Polar residues predominate over residues 99–116 (SHNTRISQSSNSGINTAH). Positions 117 to 172 (TPTQTSSTIPTTSTSTPMPTTTPTATTPASTTTAAATQISSFANSSSTTTTTLAPT) are enriched in low complexity. N-linked (GlcNAc...) asparagine glycosylation is present at asparagine 160. Positions 191–214 (TESSGDGIDADAEDDDEDDGDDKD) are enriched in acidic residues. Serine 194 carries O-linked (Xyl...) (glycosaminoglycan) serine glycosylation. The span at 215-226 (YDYNKELDKEID) shows a compositional bias: basic and acidic residues. Residues 253–270 (DEIDVDGGDEDDNGDSDI) show a composition bias toward acidic residues. A compositionally biased stretch (polar residues) spans 299 to 309 (PNTNVNSQPSD). The helical transmembrane segment at 341–365 (LAAVIGGAVVGLLCAILVVMFIVYR) threads the bilayer. At 366-399 (MRKKDEGSYALDEPKRSPANNSYAKNANNREFYA) the chain is on the cytoplasmic side. A disordered region spans residues 373 to 399 (SYALDEPKRSPANNSYAKNANNREFYA). Residues 383–399 (PANNSYAKNANNREFYA) show a composition bias toward polar residues.

It belongs to the syndecan proteoglycan family. In 13-16 hours embryos, expressed in lymph glands, peripheral and central nervous system and basal surfaces of gut epithelia. Sdc and robo are coexpressed in domains adjacent to slit; in tracheal pits and midline glia cells.

It is found in the membrane. Functionally, cell surface proteoglycan that bears heparan sulfate. Required for axonal and myotube guidance, is a necessary component of slit/robo signaling and is required in the slit target cells. This is Syndecan (Sdc) from Drosophila melanogaster (Fruit fly).